A 78-amino-acid polypeptide reads, in one-letter code: Large ribosomal subunit protein bL28 (78 aa).

Residues 1–25 (MSRVCQVTGKRPAVGNNRSHAKNAT) are disordered.

The protein belongs to the bacterial ribosomal protein bL28 family.

The polypeptide is Large ribosomal subunit protein bL28 (Aliivibrio salmonicida (strain LFI1238) (Vibrio salmonicida (strain LFI1238))).